Here is a 243-residue protein sequence, read N- to C-terminus: Vesicle-associated membrane protein-associated protein B (243 aa).

Alanine 2 bears the N-acetylalanine mark. At 2 to 218 the chain is on the cytoplasmic side; sequence AKVEQVLSLE…PASAMAGKEE (217 aa). The 118-residue stretch at 7 to 124 folds into the MSP domain; the sequence is VLSLEPQHEL…MDSKLRCVFE (118 aa). At serine 146 the chain carries Phosphoserine. Residue lysine 147 forms a Glycyl lysine isopeptide (Lys-Gly) (interchain with G-Cter in SUMO1) linkage. At threonine 150 the chain carries Phosphothreonine. A phosphoserine mark is found at serine 158, serine 159, and serine 160. Residues 161-196 adopt a coiled-coil conformation; sequence LDDTEVKKVMEECKRLQSEVQRLREENKQFKEEDGL. The segment covering 186–197 has biased composition (basic and acidic residues); the sequence is ENKQFKEEDGLR. Residues 186-214 form a disordered region; that stretch reads ENKQFKEEDGLRMRKTAQSNSPAPASAMA. Serine 206 carries the post-translational modification Phosphoserine. Residues 219-239 form a helical; Anchor for type IV membrane protein membrane-spanning segment; that stretch reads GLSTRLLALVVLFFIVGVIIG.

It belongs to the VAMP-associated protein (VAP) (TC 9.B.17) family. Homodimer, and heterodimer with VAPA. Interacts with VAMP1 and VAMP2. Interacts (via MSP domain) with ZFYVE27. Interacts with RMDN3. Interacts with KIF5A in a ZFYVE27-dependent manner. Interacts (via MSP domain) with STARD3 (via phospho-FFAT motif). Interacts with STARD3NL (via FFAT motif). Interacts with CERT1. Interacts with PLEKHA3 and SACM1L to form a ternary complex. Interacts with VPS13A (via FFAT motif). Interacts with RB1CC1 (via phosphorylated FFAT motif), MIGA2 (via phosphorylated FFAT motif), RMDN3 (via phosphorylated FFAT motif), OSBPL1A (via FFAT motif), KCNB1 (via phosphorylated FFAT motif) and KCNB2 (via phosphorylated FFAT motif). Interacts (via MSP domain) with WDR44 (via FFAT motif); the interactions connect the endoplasmic reticulum (ER) with the endosomal tubule.

The protein resides in the endoplasmic reticulum membrane. Its function is as follows. Endoplasmic reticulum (ER)-anchored protein that mediates the formation of contact sites between the ER and endosomes via interaction with FFAT motif-containing proteins such as STARD3 or WDR44. Interacts with STARD3 in a FFAT motif phosphorylation dependent manner. Via interaction with WDR44 participates in neosynthesized protein export. Participates in the endoplasmic reticulum unfolded protein response (UPR) by inducing ERN1/IRE1 activity. Involved in cellular calcium homeostasis regulation. This Bos taurus (Bovine) protein is Vesicle-associated membrane protein-associated protein B.